Here is a 383-residue protein sequence, read N- to C-terminus: Protein delta homolog 2 (383 aa).

The signal sequence occupies residues 1–26 (MPSGCRCLHLVCLLCILGAPVKPARG). 4 consecutive EGF-like domains span residues 27–58 (NDCSSLCDLAHGCCAPDGSCRCDPGWEGLHCE), 62–89 (RMPGCQHGTCHQPWQCICHTGWAGKFCD), 91–129 (DEHICTTQSPCRNGGQCVYDGGGDYHCVCPPGFHGRDCE), and 131–172 (KAGP…ARCE). Topologically, residues 27–306 (NDCSSLCDLA…RQEAGLGEPS (280 aa)) are extracellular. 17 cysteine pairs are disulfide-bonded: Cys-29/Cys-40, Cys-33/Cys-46, Cys-48/Cys-57, Cys-66/Cys-71, Cys-79/Cys-88, Cys-95/Cys-107, Cys-101/Cys-117, Cys-119/Cys-128, Cys-135/Cys-148, Cys-142/Cys-160, Cys-162/Cys-171, Cys-178/Cys-189, Cys-183/Cys-198, Cys-200/Cys-209, Cys-216/Cys-227, Cys-221/Cys-236, and Cys-238/Cys-247. Asn-157 carries an N-linked (GlcNAc...) asparagine glycan. Residues 174 to 210 (NVDDCLMRPCANGATCLDGINRFSCLCPEGFTGRFCT) form the EGF-like 5; calcium-binding domain. The EGF-like 6; calcium-binding domain maps to 212 to 248 (NLDDCASRPCQRGARCRDRVHDFDCLCPSGYGGKTCE). Residues 307-327 (LVAVVVFGAVTAALVLSTVLL) traverse the membrane as a helical segment. Over 328 to 383 (TLRAWRRGFCPPGPCCYPAPHYAPARQDQECQVSMLPTGLPLPPDLPPEPGKTTAL) the chain is Cytoplasmic. Residues 364 to 383 (PTGLPLPPDLPPEPGKTTAL) are disordered. Over residues 367-377 (LPLPPDLPPEP) the composition is skewed to pro residues.

It localises to the membrane. Functionally, regulates adipogenesis. The protein is Protein delta homolog 2 (DLK2) of Bos taurus (Bovine).